Here is a 174-residue protein sequence, read N- to C-terminus: 3-hydroxyanthranilate 3,4-dioxygenase (174 aa).

Arginine 47 provides a ligand contact to O2. Fe cation is bound by residues histidine 51, glutamate 57, and histidine 95. Glutamate 57 is a substrate binding site. Positions 99 and 110 each coordinate substrate. The Fe cation site is built by cysteine 125, cysteine 128, cysteine 162, and cysteine 165.

The protein belongs to the 3-HAO family. As to quaternary structure, homodimer. It depends on Fe(2+) as a cofactor.

The enzyme catalyses 3-hydroxyanthranilate + O2 = (2Z,4Z)-2-amino-3-carboxymuconate 6-semialdehyde. Its pathway is cofactor biosynthesis; NAD(+) biosynthesis; quinolinate from L-kynurenine: step 3/3. Catalyzes the oxidative ring opening of 3-hydroxyanthranilate to 2-amino-3-carboxymuconate semialdehyde, which spontaneously cyclizes to quinolinate. In Burkholderia lata (strain ATCC 17760 / DSM 23089 / LMG 22485 / NCIMB 9086 / R18194 / 383), this protein is 3-hydroxyanthranilate 3,4-dioxygenase.